The chain runs to 517 residues: GMP synthase [glutamine-hydrolyzing] (517 aa).

Residues 9–199 (RILILDFGSQ…VLGVCGCERL (191 aa)) enclose the Glutamine amidotransferase type-1 domain. The active-site Nucleophile is Cys86. Catalysis depends on residues His173 and Glu175. The region spanning 200-392 (WTSESIIEDA…LGLPYNMLYR (193 aa)) is the GMPS ATP-PPase domain. 227 to 233 (SGGVDSS) provides a ligand contact to ATP.

Homodimer.

The catalysed reaction is XMP + L-glutamine + ATP + H2O = GMP + L-glutamate + AMP + diphosphate + 2 H(+). Its pathway is purine metabolism; GMP biosynthesis; GMP from XMP (L-Gln route): step 1/1. Functionally, catalyzes the synthesis of GMP from XMP. The sequence is that of GMP synthase [glutamine-hydrolyzing] from Vibrio campbellii (strain ATCC BAA-1116).